A 132-amino-acid chain; its full sequence is Group 2 truncated hemoglobin YjbI (132 aa).

Heme is bound by residues threonine 45, lysine 48, tyrosine 63, and histidine 76.

Belongs to the truncated hemoglobin family. Group II subfamily. Monomer. Requires heme as cofactor.

In terms of biological role, hemoglobin-like protein that exhibits a low peroxidase activity. Its very high oxygen affinity may rule out the possibility that it is involved in oxygen transport. In Bacillus subtilis (strain 168), this protein is Group 2 truncated hemoglobin YjbI (yjbI).